The following is a 350-amino-acid chain: Glycolate oxidase subunit GlcE (350 aa).

The FAD-binding PCMH-type domain maps to 1 to 173 (MLRECDYSQA…TEISMKVLPR (173 aa)).

In terms of assembly, the glycolate oxidase likely consists of three subunits, GlcD, GlcE and GlcF. It depends on FAD as a cofactor.

It is found in the cell inner membrane. It carries out the reaction glycolate + A = glyoxylate + AH2. The enzyme catalyses (R)-lactate + A = pyruvate + AH2. In vitro the glycolate oxidase activity is inhibited by the sulfhydryl inhibitors CuSO4 and PCMB, by KCN, but not by the metal complexing agent EDTA. In terms of biological role, component of a complex that catalyzes the oxidation of glycolate to glyoxylate. Is required for E.coli to grow on glycolate as a sole source of carbon. Is also able to oxidize D-lactate ((R)-lactate) with a similar rate. Does not link directly to O(2), and 2,6-dichloroindophenol (DCIP) and phenazine methosulfate (PMS) can act as artificial electron acceptors in vitro, but the physiological molecule that functions as a primary electron acceptor during glycolate oxidation is unknown. The protein is Glycolate oxidase subunit GlcE of Escherichia coli (strain K12).